A 491-amino-acid chain; its full sequence is UDP-N-acetylmuramate--L-alanine ligase (491 aa).

126 to 132 (GTHGKTT) provides a ligand contact to ATP.

It belongs to the MurCDEF family.

The protein localises to the cytoplasm. It catalyses the reaction UDP-N-acetyl-alpha-D-muramate + L-alanine + ATP = UDP-N-acetyl-alpha-D-muramoyl-L-alanine + ADP + phosphate + H(+). It participates in cell wall biogenesis; peptidoglycan biosynthesis. Cell wall formation. The polypeptide is UDP-N-acetylmuramate--L-alanine ligase (Salmonella gallinarum (strain 287/91 / NCTC 13346)).